Here is an 889-residue protein sequence, read N- to C-terminus: MSVVGFDVGNLSSYIAVARGGGIETMANEYSDRLTPSVVSFGEKSRTQGHAARSQAITNYKNTLSQFKRFIARRFSDPSVQKDAKVVPYKITQLPNGNVGMQVQYLGETETFTPEQIYAMILTKLKSTAEINLCRKVVDCVISVPQYYTDLERRGVIHAAEIAGLNCLRVISDTTAVALAYGIYKQDLPTPEEKPRNVVFVDCGHSSLQVSVCAFNKGKLKVLANASDKNLGGRDFDWLLAEHFAVDFQTRYKMDVKSNQRAWLRLMAECDKTKKLMSANATLISMNIECIMNDRDVSGKISRADFEALAAELLKRVEVPLKSVLEQTKLKPEDIHSIEIVGGSSRIPSIKETIKKVFKKECSTTLNQDEAVARGCALQCAILSPTFKVRDFTVTDLTPYPIELEWKGTEGEDGSMEVSSKNHQAPFSKMLTFYRKAPFELVARYADPNLPIPERRIGRFKINGVFPTTEGESSKIKVKVRVDGHGIFNVASASLIEKLPVQAEDAMEDGSPEENGPSKEEGSGASQAENDAPMDQSPVQGGAGEGEASADKEEQADNGSKETSKDSKDQTSESSKSDKESKDQNSEGSKSDNSSTETDAKAAKKTKKTIKTHELSITATTDELSITEVNNFFEKEGKLIAHDRLEKEKNDAKNAVEEYVYEMREKLCDKFEQYISEKERGSFSKLLEETENWLYEDGEDETKSVYQTKINSLKKIGDPVENRFKENLERPGAFEDFGKALVPYIKTLDLYSNGDEKYSHIEKEDMAKVEKCVKEKVAWRDSKVNAQNQKAPHQDPVVTAAQIRSEIQSMKFVCDPIINKPKPKPKEEPPKDNGPTPEEAAKDGGPAPPTTEGGEEKMDTSDQAPTGEASKEGETKPDETKPDVEMELD.

Disordered stretches follow at residues 504-622 and 812-889; these read EDAM…ATTD and FVCD…MELD. The span at 549-585 shows a compositional bias: basic and acidic residues; that stretch reads SADKEEQADNGSKETSKDSKDQTSESSKSDKESKDQN. Residues 586–597 show a composition bias toward polar residues; the sequence is SEGSKSDNSSTE. Residues 869 to 889 show a composition bias toward basic and acidic residues; that stretch reads ASKEGETKPDETKPDVEMELD.

This sequence belongs to the heat shock protein 70 family.

Its function is as follows. Cell surface recognition protein that binds acrosome-reacted sperm and thereby mediates binding and subsequent fusion of the sperm and egg. This is 97 kDa heat shock protein from Strongylocentrotus purpuratus (Purple sea urchin).